A 107-amino-acid chain; its full sequence is Anti-adapter protein IraM (107 aa).

This sequence belongs to the IraM/RssC family.

It is found in the cytoplasm. Inhibits RpoS proteolysis by regulating RssB activity, thereby increasing the stability of the sigma stress factor RpoS during magnesium starvation. This Escherichia coli (strain 55989 / EAEC) protein is Anti-adapter protein IraM.